The sequence spans 123 residues: Small ribosomal subunit protein uS12 (123 aa).

The disordered stretch occupies residues 1-31; sequence MPTIQQLVRKGRHSKKAKVATAGLKGSPQRR. Basic residues predominate over residues 9 to 18; sequence RKGRHSKKAK. 3-methylthioaspartic acid is present on D89.

This sequence belongs to the universal ribosomal protein uS12 family. Part of the 30S ribosomal subunit. Contacts proteins S8 and S17. May interact with IF1 in the 30S initiation complex.

Its function is as follows. With S4 and S5 plays an important role in translational accuracy. Interacts with and stabilizes bases of the 16S rRNA that are involved in tRNA selection in the A site and with the mRNA backbone. Located at the interface of the 30S and 50S subunits, it traverses the body of the 30S subunit contacting proteins on the other side and probably holding the rRNA structure together. The combined cluster of proteins S8, S12 and S17 appears to hold together the shoulder and platform of the 30S subunit. This is Small ribosomal subunit protein uS12 from Corynebacterium aurimucosum (strain ATCC 700975 / DSM 44827 / CIP 107346 / CN-1) (Corynebacterium nigricans).